Consider the following 388-residue polypeptide: Succinate--CoA ligase [ADP-forming] subunit beta (388 aa).

Residues 9-244 form the ATP-grasp domain; it reads KEILRKYNVP…LDEEDANEIE (236 aa). Residues K46, 53–55, E99, A102, and E107 each bind ATP; that span reads GRG. Mg(2+) contacts are provided by N199 and D213. Substrate contacts are provided by residues N264 and 321–323; that span reads GIM.

It belongs to the succinate/malate CoA ligase beta subunit family. Heterotetramer of two alpha and two beta subunits. Mg(2+) serves as cofactor.

The catalysed reaction is succinate + ATP + CoA = succinyl-CoA + ADP + phosphate. The enzyme catalyses GTP + succinate + CoA = succinyl-CoA + GDP + phosphate. Its pathway is carbohydrate metabolism; tricarboxylic acid cycle; succinate from succinyl-CoA (ligase route): step 1/1. Succinyl-CoA synthetase functions in the citric acid cycle (TCA), coupling the hydrolysis of succinyl-CoA to the synthesis of either ATP or GTP and thus represents the only step of substrate-level phosphorylation in the TCA. The beta subunit provides nucleotide specificity of the enzyme and binds the substrate succinate, while the binding sites for coenzyme A and phosphate are found in the alpha subunit. The chain is Succinate--CoA ligase [ADP-forming] subunit beta from Ralstonia nicotianae (strain ATCC BAA-1114 / GMI1000) (Ralstonia solanacearum).